Reading from the N-terminus, the 160-residue chain is Cytochrome b6-f complex subunit 4 (160 aa).

3 consecutive transmembrane segments (helical) span residues 36–56, 95–115, and 131–151; these read LLYV…ALAV, LLGI…PFIE, and AVFL…TFPI.

The protein belongs to the cytochrome b family. PetD subfamily. In terms of assembly, the 4 large subunits of the cytochrome b6-f complex are cytochrome b6, subunit IV (17 kDa polypeptide, PetD), cytochrome f and the Rieske protein, while the 4 small subunits are PetG, PetL, PetM and PetN. The complex functions as a dimer.

It is found in the cellular thylakoid membrane. Component of the cytochrome b6-f complex, which mediates electron transfer between photosystem II (PSII) and photosystem I (PSI), cyclic electron flow around PSI, and state transitions. The protein is Cytochrome b6-f complex subunit 4 of Rippkaea orientalis (strain PCC 8801 / RF-1) (Cyanothece sp. (strain PCC 8801)).